A 438-amino-acid polypeptide reads, in one-letter code: GTPase Der (438 aa).

2 EngA-type G domains span residues 4–169 (PVVA…PEKG) and 178–353 (IDVA…DQNS). GTP-binding positions include 10 to 17 (GRPNVGKS), 57 to 61 (DTGGI), 120 to 123 (NKVD), 184 to 191 (GKPNVGKS), 231 to 235 (DTAGL), and 296 to 299 (NKWD). A KH-like domain is found at 354–438 (RRVKTGLLNE…PIRLKFKQKT (85 aa)).

It belongs to the TRAFAC class TrmE-Era-EngA-EngB-Septin-like GTPase superfamily. EngA (Der) GTPase family. Associates with the 50S ribosomal subunit.

Functionally, GTPase that plays an essential role in the late steps of ribosome biogenesis. This is GTPase Der from Halothermothrix orenii (strain H 168 / OCM 544 / DSM 9562).